A 445-amino-acid chain; its full sequence is KICSTOR subunit 2 (445 aa).

This sequence belongs to the KICS2 family. Part of the KICSTOR complex composed of KPTN, ITFG2, KICS2 and SZT2. SZT2 probably serves as a link between the other three proteins in the KICSTOR complex and may mediate the direct interaction with the GATOR complex via GATOR1. The KICSTOR complex interacts directly with the GATOR1 complex and most probably indirectly with the GATOR2 complex in an amino acid-independent manner.

The protein localises to the lysosome membrane. As part of the KICSTOR complex functions in the amino acid-sensing branch of the TORC1 signaling pathway. Recruits, in an amino acid-independent manner, the GATOR1 complex to the lysosomal membranes and allows its interaction with GATOR2 and the RAG GTPases. Functions upstream of the RAG GTPases and is required to negatively regulate mTORC1 signaling in absence of amino acids. In absence of the KICSTOR complex mTORC1 is constitutively localized to the lysosome and activated. The KICSTOR complex is also probably involved in the regulation of mTORC1 by glucose. This chain is KICSTOR subunit 2, found in Homo sapiens (Human).